The sequence spans 459 residues: Nuclear distribution protein nudF 1 (459 aa).

Positions 9 to 41 (QAEELHKSIIAYLSANNLSNAASALRGELGLSE) constitute a LisH domain. Residues 61-88 (TSIVRLQKKIMDLEARCGALQTELNNAT) adopt a coiled-coil conformation. 8 WD repeats span residues 114 to 155 (SHRN…TTLK), 157 to 197 (HTRA…KNIR), 201 to 240 (GHEHSVSAVRFIPGRNLLTSASRDKDLRIWDVTTGFCVKT), 243 to 282 (GHSGWVRDVCPSFDGNYLFSAGDDVTARLWDITNISNPEA), 288 to 349 (GHDH…LMTL), 351 to 390 (GHDNWVRAIVFHPGGKYLLSASDDKSIRCWDLSQDGKCVK), 395 to 440 (AHGR…PQVQ), and 442 to 459 (RCVVASGGVDQKLNIFAN).

Belongs to the WD repeat LIS1/nudF family. In terms of assembly, self-associates. Interacts with nudE and dynein.

It localises to the cytoplasm. The protein resides in the cytoskeleton. It is found in the spindle pole. In terms of biological role, positively regulates the activity of the minus-end directed microtubule motor protein dynein. May enhance dynein-mediated microtubule sliding by targeting dynein to the microtubule plus end. Required for nuclear migration during vegetative growth as well as development. Required for retrograde early endosome (EE) transport from the hyphal tip. Required for localization of dynein to the mitotic spindle poles. Recruits additional proteins to the dynein complex at SPBs. This chain is Nuclear distribution protein nudF 1, found in Talaromyces marneffei (strain ATCC 18224 / CBS 334.59 / QM 7333) (Penicillium marneffei).